We begin with the raw amino-acid sequence, 198 residues long: Ras-related protein Rab-34, isoform NARR (198 aa).

13 tandem repeats follow at residues 7-15 (PRDDVGSPR), 16-24 (PRVIVGTIR), 25-33 (PRVIVGTIR), 34-42 (PRVIVGSAR), 43-51 (ARPPPDGTP), 52-60 (RPQLAAEES), 61-69 (PRPRVIFGT), 70-78 (PRARVILGS), 79-87 (PRPRVIVSS), 88-96 (PWPAVVVAS), 97-105 (PRPRTPVGS), 106-114 (PWPRVVVGT), and 115-123 (PRPRVIVGS). Residues 7–125 (PRDDVGSPRP…RPRVIVGSPR (119 aa)) are 13 x 9 AA approximate tandem-repeats of P-R-V-I-V-G-(S/T)-P-R. S13 carries the phosphoserine modification. Residues 37–64 (IVGSARARPPPDGTPRPQLAAEESPRPR) are disordered. The residue at position 69 (T69) is a Phosphothreonine. 3 positions are modified to phosphoserine: S78, S87, and S96. Residues 94-121 (VASPRPRTPVGSPWPRVVVGTPRPRVIV) are compositionally biased toward low complexity. Positions 94-198 (VASPRPRTPV…GAPDRHRGQI (105 aa)) are disordered. S123 carries the post-translational modification Phosphoserine. The span at 145 to 157 (RRQDEHSGTRAEG) shows a compositional bias: basic and acidic residues. The segment covering 161–178 (GGAAPVPEEGGRFARAQR) has biased composition (low complexity).

In terms of assembly, may interact with EIF5A and ERF1. In terms of processing, phosphorylated during M-phase.

It is found in the nucleus. The protein localises to the nucleolus. The sequence is that of Ras-related protein Rab-34, isoform NARR (RAB34) from Homo sapiens (Human).